A 185-amino-acid polypeptide reads, in one-letter code: Ribosome-recycling factor (185 aa).

It belongs to the RRF family.

Its subcellular location is the cytoplasm. Its function is as follows. Responsible for the release of ribosomes from messenger RNA at the termination of protein biosynthesis. May increase the efficiency of translation by recycling ribosomes from one round of translation to another. This chain is Ribosome-recycling factor, found in Teredinibacter turnerae (strain ATCC 39867 / T7901).